A 1372-amino-acid polypeptide reads, in one-letter code: DNA-directed RNA polymerase subunit beta (1372 aa).

It belongs to the RNA polymerase beta chain family. As to quaternary structure, the RNAP catalytic core consists of 2 alpha, 1 beta, 1 beta' and 1 omega subunit. When a sigma factor is associated with the core the holoenzyme is formed, which can initiate transcription.

The catalysed reaction is RNA(n) + a ribonucleoside 5'-triphosphate = RNA(n+1) + diphosphate. In terms of biological role, DNA-dependent RNA polymerase catalyzes the transcription of DNA into RNA using the four ribonucleoside triphosphates as substrates. In Rickettsia bellii (strain RML369-C), this protein is DNA-directed RNA polymerase subunit beta.